The primary structure comprises 637 residues: MDTTNNTYARSISSNGNDNFPTPDWQFNGSQLQQNRKSKMNGRSVTNVFPNAFSDAEFEQISMPELNLKRFNPTTLEENNSDLSDMSSWDYMMNVPIRVYNDADTMDPFSLDTIPDSSMDMPFDPLASDYGNAANFPSVPSSLGSNHQFITTPPVNGSNEPTSAQTNHIITANSSPSGNAGSNASASMSVPPPLTPSASTINDQPFSNSFDLPSQVIADGTGAISDINGNPFPMNSPPLDMEPLPSISMDASDSVSEQLVKDASLPSGPFSTDYLENGSDLKRSLGHNQKSDRVSKDVSPQHQANPSTLNNPLKTQNFDSSKNLYTDNKDSSLVSPTGLQSRMEQNPEVRAHPMKDSATSTALRRSHALGAAADSLLPQENSAQIYDGKDVSMVNDNMHSDVRQDSFNKESIKQRIPSLSPPITRSYNAKHRPSLVLGTSVNPHSLSPSQPPVVVPSNTTISSSPPLTSPVKTSANIPNLLPTSELDSSNAPHSQSAATHDLNDVKSYYNTRSSHSVVPNPTNQKVSITGAAADGPNGSAPVDTTPTNSSTTATGAQRKRRKFKFGKQIGPVRCTLQNRVTGEICNTVFSRTYDLIRHQDTIHAKTRPVFRCEICGDQRHFSRHDALVRHLRVKHGR.

Disordered stretches follow at residues 1–41, 145–164, 169–207, 221–363, 404–427, and 440–558; these read MDTT…SKMN, SNHQ…PTSA, IITA…QPFS, TGAI…STAL, QDSF…TRSY, and SVNP…GAQR. Over residues 172-189 the composition is skewed to low complexity; it reads ANSSPSGNAGSNASASMS. Over residues 196–207 the composition is skewed to polar residues; it reads PSASTINDQPFS. A compositionally biased stretch (basic and acidic residues) spans 279–296; sequence SDLKRSLGHNQKSDRVSK. Over residues 298 to 344 the composition is skewed to polar residues; that stretch reads VSPQHQANPSTLNNPLKTQNFDSSKNLYTDNKDSSLVSPTGLQSRME. Basic and acidic residues-rich tracts occupy residues 345 to 355 and 404 to 413; these read QNPEVRAHPMK and QDSFNKESIK. Residues 455–471 show a composition bias toward low complexity; that stretch reads VPSNTTISSSPPLTSPV. Polar residues-rich tracts occupy residues 472 to 498 and 508 to 527; these read KTSA…QSAA and YYNT…QKVS. The segment covering 544-554 has biased composition (low complexity); it reads TTPTNSSTTAT. The C2H2-type 1 zinc finger occupies 572–603; sequence VRCTLQNRVTGEICNTVFSRTYDLIRHQDTIH. The C2H2-type 2; degenerate zinc-finger motif lies at 610–635; the sequence is FRCEICGDQRHFSRHDALVRHLRVKH.

The protein resides in the nucleus. The protein is Zinc finger protein rsv2 (rsv2) of Schizosaccharomyces pombe (strain 972 / ATCC 24843) (Fission yeast).